Here is a 115-residue protein sequence, read N- to C-terminus: NAD(P)H-quinone oxidoreductase subunit M (115 aa).

Belongs to the complex I NdhM subunit family. NDH-1 can be composed of about 15 different subunits; different subcomplexes with different compositions have been identified which probably have different functions.

It localises to the cellular thylakoid membrane. The enzyme catalyses a plastoquinone + NADH + (n+1) H(+)(in) = a plastoquinol + NAD(+) + n H(+)(out). It carries out the reaction a plastoquinone + NADPH + (n+1) H(+)(in) = a plastoquinol + NADP(+) + n H(+)(out). In terms of biological role, NDH-1 shuttles electrons from an unknown electron donor, via FMN and iron-sulfur (Fe-S) centers, to quinones in the respiratory and/or the photosynthetic chain. The immediate electron acceptor for the enzyme in this species is believed to be plastoquinone. Couples the redox reaction to proton translocation, and thus conserves the redox energy in a proton gradient. Cyanobacterial NDH-1 also plays a role in inorganic carbon-concentration. The polypeptide is NAD(P)H-quinone oxidoreductase subunit M (Parasynechococcus marenigrum (strain WH8102)).